The sequence spans 244 residues: HTH-type transcriptional repressor PhnF (244 aa).

Residues Arg-8–Pro-74 form the HTH gntR-type domain. A DNA-binding region (H-T-H motif) is located at residues Glu-35–Arg-54.

The protein localises to the cytoplasm. Its function is as follows. Represses the phnDCE operon, involved in the uptake of phosphate, under conditions of phosphate availability in the cell. The polypeptide is HTH-type transcriptional repressor PhnF (phnF) (Mycolicibacterium smegmatis (strain ATCC 700084 / mc(2)155) (Mycobacterium smegmatis)).